We begin with the raw amino-acid sequence, 617 residues long: NADPH-dependent diflavin oxidoreductase 1 (617 aa).

The Flavodoxin-like domain maps to 3–147 (PMILYASETG…AFLPWLQQTL (145 aa)). Residues 9-14 (SETGNA), 56-59 (STHG), 94-103 (LGDSSYERFC), and glutamate 129 each bind FMN. In terms of domain architecture, FAD-binding FR-type spans 226 to 465 (DDWVWATLKK…HIASPTLFLP (240 aa)). Residues 404 to 407 (RQFS) and 438 to 441 (GLCS) contribute to the FAD site. Residues threonine 479, 534–535 (SR), and 540–544 (RIYVQ) each bind NADP(+). Tryptophan 617 lines the FAD pocket.

It belongs to the NADPH-dependent diflavin oxidoreductase NDOR1 family. In the N-terminal section; belongs to the flavodoxin family. The protein in the C-terminal section; belongs to the flavoprotein pyridine nucleotide cytochrome reductase family. In terms of assembly, interacts with DRE2; as part of the cytosolic iron-sulfur (Fe-S) protein assembly (CIA) machinery. FAD is required as a cofactor. The cofactor is FMN.

The protein localises to the cytoplasm. The protein resides in the mitochondrion. It catalyses the reaction 2 oxidized [2Fe-2S]-[protein] + NADPH = 2 reduced [2Fe-2S]-[protein] + NADP(+) + H(+). Functionally, NADPH-dependent reductase which is a central component of the cytosolic iron-sulfur (Fe-S) protein assembly (CIA) machinery. Transfers electrons from NADPH via its FAD and FMN prosthetic groups to the [2Fe-2S] cluster of DRE2, another key component of the CIA machinery. In turn, this reduced cluster provides electrons for assembly of cytosolic iron-sulfur cluster proteins. Positively controls H(2)O(2)-induced cell death. The protein is NADPH-dependent diflavin oxidoreductase 1 of Cryptococcus neoformans var. neoformans serotype D (strain B-3501A) (Filobasidiella neoformans).